A 55-amino-acid chain; its full sequence is Large ribosomal subunit protein bL33 (55 aa).

This sequence belongs to the bacterial ribosomal protein bL33 family.

In Bradyrhizobium sp. (strain BTAi1 / ATCC BAA-1182), this protein is Large ribosomal subunit protein bL33.